Consider the following 304-residue polypeptide: MQNFGKVAVLMGGFSSEREISLDSGTAILNALKSKGIDAYAFDPKETPLSELKAQGFQTAFNILHGTYGEDGAVQGALELLGIPYTGSGVAASAIGMDKYRCKLIWQALGLPVPEFAVLHDDTDFDAVEEKLGLPMFVKPAAEGSSVGVVKVKGKGRLKSVYEELKHFQGEIIAERFIGGGEYSCPVLNGKGLPGIHIIPATEFYDYEAKYNRNDTIYQCPSEDLTEAEESLMRELAVRGAQAIGAEGCVRVDFLKDTDGKLYLLEINTLPGMTGHSLVPKSAAVMGVGFADLCIEILKTAHVG.

The region spanning 103 to 299 is the ATP-grasp domain; that stretch reads KLIWQALGLP…FADLCIEILK (197 aa). 129-184 serves as a coordination point for ATP; sequence EEKLGLPMFVKPAAEGSSVGVVKVKGKGRLKSVYEELKHFQGEIIAERFIGGGEYS. Mg(2+) is bound by residues Asp-253, Glu-266, and Asn-268.

Belongs to the D-alanine--D-alanine ligase family. It depends on Mg(2+) as a cofactor. Requires Mn(2+) as cofactor.

The protein localises to the cytoplasm. The catalysed reaction is 2 D-alanine + ATP = D-alanyl-D-alanine + ADP + phosphate + H(+). It functions in the pathway cell wall biogenesis; peptidoglycan biosynthesis. Cell wall formation. This chain is D-alanine--D-alanine ligase, found in Neisseria meningitidis serogroup A / serotype 4A (strain DSM 15465 / Z2491).